The primary structure comprises 290 residues: 4-hydroxy-3-methylbut-2-enyl diphosphate reductase (290 aa).

Cysteine 12 is a binding site for [4Fe-4S] cluster. Residues histidine 50 and histidine 83 each coordinate (2E)-4-hydroxy-3-methylbut-2-enyl diphosphate. 2 residues coordinate dimethylallyl diphosphate: histidine 50 and histidine 83. Isopentenyl diphosphate-binding residues include histidine 50 and histidine 83. Position 105 (cysteine 105) interacts with [4Fe-4S] cluster. Histidine 133 contacts (2E)-4-hydroxy-3-methylbut-2-enyl diphosphate. Residue histidine 133 participates in dimethylallyl diphosphate binding. Residue histidine 133 participates in isopentenyl diphosphate binding. Catalysis depends on glutamate 135, which acts as the Proton donor. Threonine 173 is a binding site for (2E)-4-hydroxy-3-methylbut-2-enyl diphosphate. Residue cysteine 202 coordinates [4Fe-4S] cluster. (2E)-4-hydroxy-3-methylbut-2-enyl diphosphate-binding residues include serine 230, asparagine 232, and serine 274. Serine 230, asparagine 232, and serine 274 together coordinate dimethylallyl diphosphate. Isopentenyl diphosphate contacts are provided by serine 230, asparagine 232, and serine 274.

The protein belongs to the IspH family. Requires [4Fe-4S] cluster as cofactor.

The catalysed reaction is isopentenyl diphosphate + 2 oxidized [2Fe-2S]-[ferredoxin] + H2O = (2E)-4-hydroxy-3-methylbut-2-enyl diphosphate + 2 reduced [2Fe-2S]-[ferredoxin] + 2 H(+). It catalyses the reaction dimethylallyl diphosphate + 2 oxidized [2Fe-2S]-[ferredoxin] + H2O = (2E)-4-hydroxy-3-methylbut-2-enyl diphosphate + 2 reduced [2Fe-2S]-[ferredoxin] + 2 H(+). Its pathway is isoprenoid biosynthesis; dimethylallyl diphosphate biosynthesis; dimethylallyl diphosphate from (2E)-4-hydroxy-3-methylbutenyl diphosphate: step 1/1. It participates in isoprenoid biosynthesis; isopentenyl diphosphate biosynthesis via DXP pathway; isopentenyl diphosphate from 1-deoxy-D-xylulose 5-phosphate: step 6/6. In terms of biological role, catalyzes the conversion of 1-hydroxy-2-methyl-2-(E)-butenyl 4-diphosphate (HMBPP) into a mixture of isopentenyl diphosphate (IPP) and dimethylallyl diphosphate (DMAPP). Acts in the terminal step of the DOXP/MEP pathway for isoprenoid precursor biosynthesis. This Nitratidesulfovibrio vulgaris (strain DP4) (Desulfovibrio vulgaris) protein is 4-hydroxy-3-methylbut-2-enyl diphosphate reductase.